The sequence spans 501 residues: Lysine--tRNA ligase (501 aa).

The Mg(2+) site is built by Glu-402 and Glu-409.

The protein belongs to the class-II aminoacyl-tRNA synthetase family. Homodimer. It depends on Mg(2+) as a cofactor.

The protein resides in the cytoplasm. The catalysed reaction is tRNA(Lys) + L-lysine + ATP = L-lysyl-tRNA(Lys) + AMP + diphosphate. The protein is Lysine--tRNA ligase of Helicobacter pylori (strain HPAG1).